A 67-amino-acid chain; its full sequence is MLKMEVVLFTFLVLFPLSTLQLETDQPVERYVENKQDLNPDESRNFMLPIVKKCCTACRMPPCKCCA.

The signal sequence occupies residues 1–24 (MLKMEVVLFTFLVLFPLSTLQLET). A propeptide spanning residues 25–51 (DQPVERYVENKQDLNPDESRNFMLPIV) is cleaved from the precursor. Intrachain disulfides connect cysteine 54-cysteine 65, cysteine 55-cysteine 63, and cysteine 58-cysteine 66.

This sequence belongs to the conotoxin M superfamily. In terms of tissue distribution, expressed by the venom duct.

Its subcellular location is the secreted. The sequence is that of Conotoxin ArMLKM-01 from Conus arenatus (Sand-dusted cone).